Reading from the N-terminus, the 401-residue chain is Argininosuccinate synthase (401 aa).

8 to 16 (AYSGGLDTS) is a binding site for ATP. Tyr-86 is a binding site for L-citrulline. Position 116 (Gly-116) interacts with ATP. L-aspartate-binding residues include Thr-118, Asn-122, and Asp-123. Asn-122 contributes to the L-citrulline binding site. The L-citrulline site is built by Arg-126, Ser-174, Glu-258, and Tyr-270.

The protein belongs to the argininosuccinate synthase family. Type 1 subfamily. Homotetramer.

It is found in the cytoplasm. The enzyme catalyses L-citrulline + L-aspartate + ATP = 2-(N(omega)-L-arginino)succinate + AMP + diphosphate + H(+). It participates in amino-acid biosynthesis; L-arginine biosynthesis; L-arginine from L-ornithine and carbamoyl phosphate: step 2/3. The protein is Argininosuccinate synthase of Acidothermus cellulolyticus (strain ATCC 43068 / DSM 8971 / 11B).